A 250-amino-acid chain; its full sequence is Iron-sulfur assembly protein 1 (250 aa).

A disordered region spans residues 54–89; that stretch reads AADSVSPDSQRPGKKPFKFIVSNQSKSSKASKSPKW. Over residues 75–89 the composition is skewed to low complexity; it reads SNQSKSSKASKSPKW. Residues Cys178, Cys242, and Cys244 each coordinate Fe cation.

It belongs to the HesB/IscA family.

It localises to the mitochondrion matrix. Functionally, involved in the assembly of mitochondrial and cytoplasmic iron-sulfur proteins. Probably involved in the binding of an intermediate of Fe/S cluster assembly. This chain is Iron-sulfur assembly protein 1 (ISA1), found in Saccharomyces cerevisiae (strain ATCC 204508 / S288c) (Baker's yeast).